Consider the following 332-residue polypeptide: NADH-quinone oxidoreductase subunit H (332 aa).

9 consecutive transmembrane segments (helical) span residues valine 16 to isoleucine 36, tyrosine 87 to phenylalanine 107, isoleucine 116 to threonine 136, leucine 164 to valine 184, valine 190 to glutamate 210, valine 231 to alanine 251, alanine 253 to isoleucine 273, valine 277 to phenylalanine 297, and valine 312 to phenylalanine 332.

The protein belongs to the complex I subunit 1 family. As to quaternary structure, NDH-1 is composed of 14 different subunits. Subunits NuoA, H, J, K, L, M, N constitute the membrane sector of the complex.

It localises to the cell membrane. The enzyme catalyses a quinone + NADH + 5 H(+)(in) = a quinol + NAD(+) + 4 H(+)(out). NDH-1 shuttles electrons from NADH, via FMN and iron-sulfur (Fe-S) centers, to quinones in the respiratory chain. The immediate electron acceptor for the enzyme in this species is believed to be ubiquinone. Couples the redox reaction to proton translocation (for every two electrons transferred, four hydrogen ions are translocated across the cytoplasmic membrane), and thus conserves the redox energy in a proton gradient. This subunit may bind ubiquinone. The chain is NADH-quinone oxidoreductase subunit H from Geobacillus thermodenitrificans (strain NG80-2).